The sequence spans 177 residues: 3-hydroxydecanoyl-[acyl-carrier-protein] dehydratase (177 aa).

Histidine 76 is an active-site residue.

The protein belongs to the thioester dehydratase family. FabA subfamily. Homodimer.

It localises to the cytoplasm. It catalyses the reaction a (3R)-hydroxyacyl-[ACP] = a (2E)-enoyl-[ACP] + H2O. It carries out the reaction (3R)-hydroxydecanoyl-[ACP] = (2E)-decenoyl-[ACP] + H2O. The catalysed reaction is (2E)-decenoyl-[ACP] = (3Z)-decenoyl-[ACP]. It functions in the pathway lipid metabolism; fatty acid biosynthesis. Functionally, necessary for the introduction of cis unsaturation into fatty acids. Catalyzes the dehydration of (3R)-3-hydroxydecanoyl-ACP to E-(2)-decenoyl-ACP and then its isomerization to Z-(3)-decenoyl-ACP. Can catalyze the dehydratase reaction for beta-hydroxyacyl-ACPs with saturated chain lengths up to 16:0, being most active on intermediate chain length. In Actinobacillus succinogenes (strain ATCC 55618 / DSM 22257 / CCUG 43843 / 130Z), this protein is 3-hydroxydecanoyl-[acyl-carrier-protein] dehydratase.